Consider the following 131-residue polypeptide: Bypass of stop codon protein 4 (131 aa).

This chain is Bypass of stop codon protein 4 (BSC4), found in Saccharomyces cerevisiae (strain ATCC 204508 / S288c) (Baker's yeast).